The chain runs to 132 residues: D-ribose pyranase (132 aa).

Catalysis depends on H20, which acts as the Proton donor. Residues D28, H98, and Y120–N122 contribute to the substrate site.

The protein belongs to the RbsD / FucU family. RbsD subfamily. Homodecamer.

The protein resides in the cytoplasm. It catalyses the reaction beta-D-ribopyranose = beta-D-ribofuranose. It functions in the pathway carbohydrate metabolism; D-ribose degradation; D-ribose 5-phosphate from beta-D-ribopyranose: step 1/2. Catalyzes the interconversion of beta-pyran and beta-furan forms of D-ribose. The sequence is that of D-ribose pyranase from Geobacillus thermodenitrificans (strain NG80-2).